A 140-amino-acid chain; its full sequence is MSKSRRTRSTSRPTSRPQPASCPCGLPEVYEACCGRFHSGAADAPTAALLMRSRYCAFVRRDEAYLLRTWHPRTRPAEVDFDPRMRWTGLEILGTTEGSAFHSAGTVTFRASYRGGALQERSRFERIGGAWVYVDGEFFE.

The interval 1 to 22 (MSKSRRTRSTSRPTSRPQPASC) is disordered. Positions 10–19 (TSRPTSRPQP) are enriched in low complexity.

This sequence belongs to the UPF0225 family.

The protein is UPF0225 protein SAV_6631 of Streptomyces avermitilis (strain ATCC 31267 / DSM 46492 / JCM 5070 / NBRC 14893 / NCIMB 12804 / NRRL 8165 / MA-4680).